The primary structure comprises 82 residues: Small ribosomal subunit protein uS17 (82 aa).

The protein belongs to the universal ribosomal protein uS17 family. In terms of assembly, part of the 30S ribosomal subunit.

In terms of biological role, one of the primary rRNA binding proteins, it binds specifically to the 5'-end of 16S ribosomal RNA. The sequence is that of Small ribosomal subunit protein uS17 from Xanthobacter autotrophicus (strain ATCC BAA-1158 / Py2).